A 704-amino-acid chain; its full sequence is Fatty acid oxidation complex subunit alpha (704 aa).

Positions 1–190 (MSEQKAFSLK…KLGVVDACVP (190 aa)) are enoyl-CoA hydratase. A 3-hydroxyacyl-CoA dehydrogenase region spans residues 308–704 (TAVNKVGVLG…RAGEGRNFYD (397 aa)).

The protein in the N-terminal section; belongs to the enoyl-CoA hydratase/isomerase family. This sequence in the central section; belongs to the 3-hydroxyacyl-CoA dehydrogenase family. As to quaternary structure, heterotetramer of two alpha chains (FadJ) and two beta chains (FadI).

The protein localises to the cytoplasm. It carries out the reaction a (3S)-3-hydroxyacyl-CoA = a (2E)-enoyl-CoA + H2O. It catalyses the reaction a 4-saturated-(3S)-3-hydroxyacyl-CoA = a (3E)-enoyl-CoA + H2O. The catalysed reaction is a (3S)-3-hydroxyacyl-CoA + NAD(+) = a 3-oxoacyl-CoA + NADH + H(+). The enzyme catalyses (3S)-3-hydroxybutanoyl-CoA = (3R)-3-hydroxybutanoyl-CoA. It participates in lipid metabolism; fatty acid beta-oxidation. Functionally, catalyzes the formation of a hydroxyacyl-CoA by addition of water on enoyl-CoA. Also exhibits 3-hydroxyacyl-CoA epimerase and 3-hydroxyacyl-CoA dehydrogenase activities. In Vibrio campbellii (strain ATCC BAA-1116), this protein is Fatty acid oxidation complex subunit alpha.